The following is a 375-amino-acid chain: Alcohol dehydrogenase 4, mitochondrial (375 aa).

A mitochondrion-targeting transit peptide spans 1–27 (MFRLARAQTALANKASVSRSFLRLNSS). Zn(2+)-binding residues include C71, H94, C125, C128, C131, C139, and C181. NAD(+)-binding positions include 205-211 (GAAGGLG), D229, K234, 296-298 (VGL), and R368.

The protein belongs to the zinc-containing alcohol dehydrogenase family. In terms of assembly, homotetramer. Requires Zn(2+) as cofactor.

It localises to the mitochondrion matrix. The catalysed reaction is a primary alcohol + NAD(+) = an aldehyde + NADH + H(+). The enzyme catalyses a secondary alcohol + NAD(+) = a ketone + NADH + H(+). The polypeptide is Alcohol dehydrogenase 4, mitochondrial (ADH4) (Kluyveromyces lactis (strain ATCC 8585 / CBS 2359 / DSM 70799 / NBRC 1267 / NRRL Y-1140 / WM37) (Yeast)).